Here is a 212-residue protein sequence, read N- to C-terminus: Ribonuclease HII (212 aa).

Residues 7 to 212 (SQILGIDEAG…TIENITKSTE (206 aa)) enclose the RNase H type-2 domain. The a divalent metal cation site is built by aspartate 13, glutamate 14, and aspartate 111.

The protein belongs to the RNase HII family. It depends on Mn(2+) as a cofactor. The cofactor is Mg(2+).

Its subcellular location is the cytoplasm. It catalyses the reaction Endonucleolytic cleavage to 5'-phosphomonoester.. In terms of biological role, endonuclease that specifically degrades the RNA of RNA-DNA hybrids. The protein is Ribonuclease HII of Methanosphaera stadtmanae (strain ATCC 43021 / DSM 3091 / JCM 11832 / MCB-3).